A 365-amino-acid polypeptide reads, in one-letter code: MTQKLLLMAAGGTGGHMFPAQALAEAMLRKGWRVKLSTDPRGARYTGGFPHMTEITEVSSATFARGGLLAKAMVAPRIAAGVASMAMQMRRDRPDVVIGFGGYPSIPALGAATLLGLPRMIHEQNGVLGKVNQKFATRVAEVACGVWPTDLPAGAEGIHVGNPVRAAVLERQGAPYIPPGDYPMSLLVMGGSQGARILSDVVPGAIAALPETLRRHLRVSHQAREEDMARVAQFYADAGIDAEVQTFFADVPSRISEAQLVISRSGASSIADISVIGRPSILIPLATAAGDHQTANTRGLVEAGGAIRIPESALDTTSLAEQIAAVLTNAEGATQMAHAALSTGIPDATERLVARVEHLSEEAAP.

UDP-N-acetyl-alpha-D-glucosamine-binding positions include 13 to 15, Asn-125, Arg-165, Ser-192, and Gln-293; that span reads TGG.

Belongs to the glycosyltransferase 28 family. MurG subfamily.

The protein localises to the cell inner membrane. It carries out the reaction di-trans,octa-cis-undecaprenyl diphospho-N-acetyl-alpha-D-muramoyl-L-alanyl-D-glutamyl-meso-2,6-diaminopimeloyl-D-alanyl-D-alanine + UDP-N-acetyl-alpha-D-glucosamine = di-trans,octa-cis-undecaprenyl diphospho-[N-acetyl-alpha-D-glucosaminyl-(1-&gt;4)]-N-acetyl-alpha-D-muramoyl-L-alanyl-D-glutamyl-meso-2,6-diaminopimeloyl-D-alanyl-D-alanine + UDP + H(+). It participates in cell wall biogenesis; peptidoglycan biosynthesis. Cell wall formation. Catalyzes the transfer of a GlcNAc subunit on undecaprenyl-pyrophosphoryl-MurNAc-pentapeptide (lipid intermediate I) to form undecaprenyl-pyrophosphoryl-MurNAc-(pentapeptide)GlcNAc (lipid intermediate II). This Ruegeria sp. (strain TM1040) (Silicibacter sp.) protein is UDP-N-acetylglucosamine--N-acetylmuramyl-(pentapeptide) pyrophosphoryl-undecaprenol N-acetylglucosamine transferase.